Here is a 298-residue protein sequence, read N- to C-terminus: Protoheme IX farnesyltransferase (298 aa).

Helical transmembrane passes span 23-43 (VTQL…PGLP), 49-69 (LFGT…NCLI), 95-115 (VLSL…HLVN), 117-137 (LTMW…TVIL), 144-164 (NIVI…ASVA), 171-191 (AWVL…ALAL), 234-254 (FMHM…GIFV), and 276-296 (SILY…VGVL).

It belongs to the UbiA prenyltransferase family. Protoheme IX farnesyltransferase subfamily.

Its subcellular location is the cell inner membrane. It carries out the reaction heme b + (2E,6E)-farnesyl diphosphate + H2O = Fe(II)-heme o + diphosphate. The protein operates within porphyrin-containing compound metabolism; heme O biosynthesis; heme O from protoheme: step 1/1. Its function is as follows. Converts heme B (protoheme IX) to heme O by substitution of the vinyl group on carbon 2 of heme B porphyrin ring with a hydroxyethyl farnesyl side group. In Bordetella avium (strain 197N), this protein is Protoheme IX farnesyltransferase.